A 78-amino-acid polypeptide reads, in one-letter code: U-scoloptoxin(04)-Er1e (78 aa).

The N-terminal stretch at 1 to 24 (MTRHLIFAAMLLVCLFVCWNAVGA) is a signal peptide. The propeptide occupies 25–28 (RDAR).

The protein belongs to the scoloptoxin-04 family. In terms of processing, contains 2 disulfide bonds. In terms of tissue distribution, expressed by the venom gland.

Its subcellular location is the secreted. The polypeptide is U-scoloptoxin(04)-Er1e (Ethmostigmus rubripes (Giant centipede)).